A 367-amino-acid polypeptide reads, in one-letter code: Probable thylakoidal processing peptidase 2, chloroplastic (367 aa).

The transit peptide at 1 to 68 directs the protein to the chloroplast; it reads MAIRVTFTYS…NTWGPSSGPR (68 aa). Residues 53-72 form a disordered region; it reads DKSPGSNTWGPSSGPRARPA. Positions 62–72 are enriched in low complexity; the sequence is GPSSGPRARPA. The helical transmembrane segment at 185–205 threads the bilayer; it reads EDAKAAFTAVTVSLLFRSALA. The Lumenal, thylakoid portion of the chain corresponds to 206–367; sequence EPKSIPSTSM…VSQKRAVDVS (162 aa). Serine 214 is an active-site residue.

It belongs to the peptidase S26 family.

The protein localises to the plastid. It localises to the chloroplast thylakoid membrane. The catalysed reaction is Cleavage of hydrophobic, N-terminal signal or leader sequences from secreted and periplasmic proteins.. Its function is as follows. Cleaves the thylakoid-transfer domain from a chloroplast protein. The polypeptide is Probable thylakoidal processing peptidase 2, chloroplastic (TPP2) (Arabidopsis thaliana (Mouse-ear cress)).